A 1118-amino-acid chain; its full sequence is Protein translocase subunit SecA (1118 aa).

Residues Q176, 194 to 198, and D693 contribute to the ATP site; that span reads GEGKT. A disordered region spans residues 1034 to 1056; sequence QQPVQQPKYRETKDEAGSAFGGG.

This sequence belongs to the SecA family. As to quaternary structure, monomer and homodimer. Part of the essential Sec protein translocation apparatus which comprises SecA, SecYEG and auxiliary proteins SecDF. Other proteins may also be involved.

Its subcellular location is the cell inner membrane. It is found in the cytoplasm. It catalyses the reaction ATP + H2O + cellular proteinSide 1 = ADP + phosphate + cellular proteinSide 2.. In terms of biological role, part of the Sec protein translocase complex. Interacts with the SecYEG preprotein conducting channel. Has a central role in coupling the hydrolysis of ATP to the transfer of proteins into and across the cell membrane, serving as an ATP-driven molecular motor driving the stepwise translocation of polypeptide chains across the membrane. This Cytophaga hutchinsonii (strain ATCC 33406 / DSM 1761 / CIP 103989 / NBRC 15051 / NCIMB 9469 / D465) protein is Protein translocase subunit SecA.